A 142-amino-acid chain; its full sequence is Transcription antitermination protein NusB (142 aa).

The protein belongs to the NusB family.

Its function is as follows. Involved in transcription antitermination. Required for transcription of ribosomal RNA (rRNA) genes. Binds specifically to the boxA antiterminator sequence of the ribosomal RNA (rrn) operons. The protein is Transcription antitermination protein NusB of Thermotoga sp. (strain RQ2).